A 290-amino-acid polypeptide reads, in one-letter code: Acetyl-coenzyme A carboxylase carboxyl transferase subunit beta (290 aa).

A CoA carboxyltransferase N-terminal domain is found at 27 to 290 (LWHKCPSCEA…FTHSPSPVSA (264 aa)). Residues Cys-31, Cys-34, Cys-50, and Cys-53 each contribute to the Zn(2+) site. The C4-type zinc finger occupies 31-53 (CPSCEAVLYRPELEKTLDVCPKC).

The protein belongs to the AccD/PCCB family. In terms of assembly, acetyl-CoA carboxylase is a heterohexamer composed of biotin carboxyl carrier protein (AccB), biotin carboxylase (AccC) and two subunits each of ACCase subunit alpha (AccA) and ACCase subunit beta (AccD). Zn(2+) is required as a cofactor.

Its subcellular location is the cytoplasm. The enzyme catalyses N(6)-carboxybiotinyl-L-lysyl-[protein] + acetyl-CoA = N(6)-biotinyl-L-lysyl-[protein] + malonyl-CoA. The protein operates within lipid metabolism; malonyl-CoA biosynthesis; malonyl-CoA from acetyl-CoA: step 1/1. Functionally, component of the acetyl coenzyme A carboxylase (ACC) complex. Biotin carboxylase (BC) catalyzes the carboxylation of biotin on its carrier protein (BCCP) and then the CO(2) group is transferred by the transcarboxylase to acetyl-CoA to form malonyl-CoA. The protein is Acetyl-coenzyme A carboxylase carboxyl transferase subunit beta of Pseudomonas paraeruginosa (strain DSM 24068 / PA7) (Pseudomonas aeruginosa (strain PA7)).